The primary structure comprises 144 residues: Mediator of RNA polymerase II transcription subunit 21 (144 aa).

The protein belongs to the Mediator complex subunit 21 family. Interacts with PPARG. Component of the Mediator complex, which is composed of MED1, MED4, MED6, MED7, MED8, MED9, MED10, MED11, MED12, MED13, MED13L, MED14, MED15, MED16, MED17, MED18, MED19, MED20, MED21, MED22, MED23, MED24, MED25, MED26, MED27, MED29, MED30, MED31, CCNC, CDK8 and CDC2L6/CDK11. The MED12, MED13, CCNC and CDK8 subunits form a distinct module termed the CDK8 module. Mediator containing the CDK8 module is less active than Mediator lacking this module in supporting transcriptional activation. Individual preparations of the Mediator complex lacking one or more distinct subunits have been variously termed ARC, CRSP, DRIP, PC2, SMCC and TRAP. Interacts with THRA in a ligand-dependent fashion.

It is found in the nucleus. Component of the Mediator complex, a coactivator involved in the regulated transcription of nearly all RNA polymerase II-dependent genes. Mediator functions as a bridge to convey information from gene-specific regulatory proteins to the basal RNA polymerase II transcription machinery. Mediator is recruited to promoters by direct interactions with regulatory proteins and serves as a scaffold for the assembly of a functional preinitiation complex with RNA polymerase II and the general transcription factors. This chain is Mediator of RNA polymerase II transcription subunit 21 (MED21), found in Homo sapiens (Human).